Consider the following 524-residue polypeptide: Tyrosine-protein kinase HCK (524 aa).

Positions 1–72 are disordered; it reads MGGRSSCEDP…NNSNSMPPGF (72 aa). The N-myristoyl glycine moiety is linked to residue Gly2. The S-palmitoyl cysteine moiety is linked to residue Gly3. Residues 29-38 show a composition bias toward basic and acidic residues; sequence FLRDGSKASK. The residue at position 50 (Tyr50) is a Phosphotyrosine; by autocatalysis. A compositionally biased stretch (polar residues) spans 54–68; it reads PTSSSKLGPNNSNSM. In terms of domain architecture, SH3 spans 76–136; it reads SEDTIVVALY…PSNYVARVNS (61 aa). The region spanning 142–239 is the SH2 domain; that stretch reads WFFKGISRKD…GLCQKLSVPC (98 aa). At Thr200 the chain carries Phosphothreonine. At Tyr207 the chain carries Phosphotyrosine. The Protein kinase domain maps to 260 to 513; the sequence is LQMEKKLGAG…YIQSVLDDFY (254 aa). Residues 266-274 and Lys288 each bind ATP; that span reads LGAGQFGEV. Asp379 serves as the catalytic Proton acceptor. At Tyr409 the chain carries Phosphotyrosine; by autocatalysis. Ser460 bears the Phosphoserine mark. Tyr520 is modified (phosphotyrosine).

This sequence belongs to the protein kinase superfamily. Tyr protein kinase family. SRC subfamily. As to quaternary structure, interacts with ADAM15. Interacts with FASLG. Interacts with ARRB1 and ARRB2. Interacts with FCGR1A; the interaction may be indirect. Interacts with IL6ST. Interacts (via SH3 domain) with ELMO1. Interacts (via SH3 domain) with TP73. Interacts with YAP1. Interacts with ABL1 and ITGB1, and thereby recruits ABL1 to activated ITGB1. Interacts (via SH2 domain) with FLT3 (tyrosine phosphorylated). Interacts with CBL. Interacts with VAV1, WAS and RAPGEF1. Interacts (via SH3 domain) with WDCP. Phosphorylated on several tyrosine residues. Autophosphorylated. Becomes rapidly phosphorylated upon activation of the immunoglobulin receptors FCGR1A and FCGR2A. Phosphorylation at Tyr-409 increases kinase activity. Phosphorylation at Tyr-520 inhibits kinase activity. Kinase activity is not required for phosphorylation at Tyr-520, suggesting that this site may be a target of other kinases. In terms of processing, ubiquitinated by CBL, leading to its degradation via the proteasome. Post-translationally, isoform 2 palmitoylation at position 2 requires prior myristoylation. Palmitoylation at position 3 is required for caveolar localization of isoform 2. Expressed predominantly in cells of the myeloid and B-lymphoid lineages.

The protein localises to the cytoplasmic vesicle. Its subcellular location is the secretory vesicle. The protein resides in the cytoplasm. It localises to the cytosol. It is found in the membrane. The protein localises to the caveola. Its subcellular location is the lysosome. The protein resides in the cell projection. It localises to the podosome membrane. It is found in the cell membrane. The protein localises to the cell junction. Its subcellular location is the focal adhesion. The protein resides in the cytoskeleton. It localises to the golgi apparatus. It is found in the nucleus. It carries out the reaction L-tyrosyl-[protein] + ATP = O-phospho-L-tyrosyl-[protein] + ADP + H(+). Its activity is regulated as follows. Subject to autoinhibition, mediated by intramolecular interactions involving the SH2 and SH3 domains. Kinase activity is also regulated by phosphorylation at regulatory tyrosine residues. Phosphorylation at Tyr-409 is required for optimal activity. Phosphorylation at Tyr-520 inhibits kinase activity. Inhibited by PP1. Its function is as follows. Non-receptor tyrosine-protein kinase found in hematopoietic cells that transmits signals from cell surface receptors and plays an important role in the regulation of innate immune responses, including neutrophil, monocyte, macrophage and mast cell functions, phagocytosis, cell survival and proliferation, cell adhesion and migration. Acts downstream of receptors that bind the Fc region of immunoglobulins, such as FCGR1A and FCGR2A, but also CSF3R, PLAUR, the receptors for IFNG, IL2, IL6 and IL8, and integrins, such as ITGB1 and ITGB2. During the phagocytic process, mediates mobilization of secretory lysosomes, degranulation, and activation of NADPH oxidase to bring about the respiratory burst. Plays a role in the release of inflammatory molecules. Promotes reorganization of the actin cytoskeleton and actin polymerization, formation of podosomes and cell protrusions. Inhibits TP73-mediated transcription activation and TP73-mediated apoptosis. Phosphorylates CBL in response to activation of immunoglobulin gamma Fc region receptors. Phosphorylates ADAM15, BCR, ELMO1, FCGR2A, GAB1, GAB2, RAPGEF1, STAT5B, TP73, VAV1 and WAS. The sequence is that of Tyrosine-protein kinase HCK (Hck) from Mus musculus (Mouse).